Consider the following 467-residue polypeptide: Uronate isomerase (467 aa).

This sequence belongs to the metallo-dependent hydrolases superfamily. Uronate isomerase family.

It carries out the reaction D-glucuronate = D-fructuronate. The enzyme catalyses aldehydo-D-galacturonate = keto-D-tagaturonate. Its pathway is carbohydrate metabolism; pentose and glucuronate interconversion. The protein is Uronate isomerase of Mannheimia succiniciproducens (strain KCTC 0769BP / MBEL55E).